The sequence spans 203 residues: Pro-FMRFamide-related neuropeptide VF (203 aa).

An N-terminal signal peptide occupies residues 1 to 26; it reads MEIISSKRFILLTLATSSFLTSNTLC. Residues 27-57 constitute a propeptide that is removed on maturation; sequence SDELMMPHFHSKEGYGKYYQLRGIPKGVKER. Phe94 is modified (phenylalanine amide). The propeptide occupies 97–106; it reads NIEDRRSPRA. Position 125 is a phenylalanine amide (Phe125). Residues 128–203 constitute a propeptide that is removed on maturation; the sequence is TTARRITKTL…QPVLQGAMKL (76 aa). The segment at 161–186 is disordered; the sequence is HQEIQSPGQEQPRKRVFTETDDAERK. Basic and acidic residues predominate over residues 171-186; the sequence is QPRKRVFTETDDAERK.

The protein belongs to the FARP (FMRFamide related peptide) family. In terms of tissue distribution, isoform 1 is expressed at high levels in the hypothalamus and eye. Isoform 2 is specifically expressed in a region between the dorsomedial hypothalamic and ventromedial hypothalamic nuclei.

It localises to the secreted. In terms of biological role, efficiently inhibits forskolin-induced production of cAMP. Acts as a potent negative regulator of gonadotropin synthesis and secretion. Induces secretion of prolactin. Functionally, efficiently inhibits forskolin-induced production of cAMP. Blocks morphine-induced analgesia. This Rattus norvegicus (Rat) protein is Pro-FMRFamide-related neuropeptide VF (Npvf).